The primary structure comprises 347 residues: Probable dual-specificity RNA methyltransferase RlmN (347 aa).

Glutamate 93 (proton acceptor) is an active-site residue. Positions 100–323 (KAKRKTACVS…KKAGLNISTR (224 aa)) constitute a Radical SAM core domain. A disulfide bond links cysteine 107 and cysteine 334. 3 residues coordinate [4Fe-4S] cluster: cysteine 114, cysteine 118, and cysteine 121. Residues 160–161 (GE), serine 192, 215–217 (SLT), and asparagine 291 contribute to the S-adenosyl-L-methionine site. Catalysis depends on cysteine 334, which acts as the S-methylcysteine intermediate.

This sequence belongs to the radical SAM superfamily. RlmN family. [4Fe-4S] cluster is required as a cofactor.

It is found in the cytoplasm. The catalysed reaction is adenosine(2503) in 23S rRNA + 2 reduced [2Fe-2S]-[ferredoxin] + 2 S-adenosyl-L-methionine = 2-methyladenosine(2503) in 23S rRNA + 5'-deoxyadenosine + L-methionine + 2 oxidized [2Fe-2S]-[ferredoxin] + S-adenosyl-L-homocysteine. It carries out the reaction adenosine(37) in tRNA + 2 reduced [2Fe-2S]-[ferredoxin] + 2 S-adenosyl-L-methionine = 2-methyladenosine(37) in tRNA + 5'-deoxyadenosine + L-methionine + 2 oxidized [2Fe-2S]-[ferredoxin] + S-adenosyl-L-homocysteine. Specifically methylates position 2 of adenine 2503 in 23S rRNA and position 2 of adenine 37 in tRNAs. The sequence is that of Probable dual-specificity RNA methyltransferase RlmN from Treponema denticola (strain ATCC 35405 / DSM 14222 / CIP 103919 / JCM 8153 / KCTC 15104).